Reading from the N-terminus, the 1178-residue chain is F-box/WD repeat-containing protein A-like protein (1178 aa).

The START domain maps to 1 to 208 (MQYVNGMDIV…TLPNLIKYIK (208 aa)). Disordered stretches follow at residues 223–296 (KTPD…NLNE), 569–594 (SLII…DNGI), and 618–649 (SSSS…STFS). Low complexity-rich tracts occupy residues 229–293 (NPNL…SNEN) and 571–580 (IINSPPNSNN). The 47-residue stretch at 717–763 (CSLFDLLPYEMIQYIFTLMDATHLIRMSRTCKYFNRICLDDNIWRDL) folds into the F-box domain. The tract at residues 804–841 (KKSNNSSPLSASSSSSSPSPPLLPPPPPPIPQLPDMLL) is disordered. The segment covering 809–820 (SSPLSASSSSSS) has biased composition (low complexity). Positions 821–835 (PSPPLLPPPPPPIPQ) are enriched in pro residues. 7 WD repeats span residues 886–923 (GHKG…CEST), 925–979 (RCGA…IEKE), 981–1017 (RFLY…ELQM), 1020–1059 (IENT…TELV), 1062–1100 (GHKG…SAIH), 1104–1141 (SHSS…EPNL), and 1146–1178 (NNLS…FNSK).

Functionally, substrate recognition component of a SCF (SKP1-CUL1-F-box protein) E3 ubiquitin-protein ligase complex which mediates the ubiquitination and subsequent proteasomal degradation of target proteins. The protein is F-box/WD repeat-containing protein A-like protein of Dictyostelium discoideum (Social amoeba).